Here is a 152-residue protein sequence, read N- to C-terminus: Cytochrome c-type biogenesis protein CcmE (152 aa).

At 1-8 the chain is on the cytoplasmic side; sequence MQARRKTR. The helical; Signal-anchor for type II membrane protein transmembrane segment at 9–29 threads the bilayer; the sequence is LYIVLAVLAGLGLTVSLTLYA. The Periplasmic segment spans residues 30-152; sequence LSSNIDLFYT…MTPEKTGAQP (123 aa). His-130 and Tyr-134 together coordinate heme. The interval 133-152 is disordered; sequence NYTPPEVKNAMTPEKTGAQP.

Belongs to the CcmE/CycJ family.

The protein resides in the cell inner membrane. Its function is as follows. Heme chaperone required for the biogenesis of c-type cytochromes. Transiently binds heme delivered by CcmC and transfers the heme to apo-cytochromes in a process facilitated by CcmF and CcmH. This chain is Cytochrome c-type biogenesis protein CcmE, found in Klebsiella pneumoniae (strain 342).